Consider the following 40-residue polypeptide: Photosystem II reaction center protein J (40 aa).

The helical transmembrane segment at 8–28 (IPLWIIGTVAGILVIGLIGIF) threads the bilayer.

The protein belongs to the PsbJ family. As to quaternary structure, PSII is composed of 1 copy each of membrane proteins PsbA, PsbB, PsbC, PsbD, PsbE, PsbF, PsbH, PsbI, PsbJ, PsbK, PsbL, PsbM, PsbT, PsbX, PsbY, PsbZ, Psb30/Ycf12, at least 3 peripheral proteins of the oxygen-evolving complex and a large number of cofactors. It forms dimeric complexes.

It is found in the plastid. The protein resides in the chloroplast thylakoid membrane. Its function is as follows. One of the components of the core complex of photosystem II (PSII). PSII is a light-driven water:plastoquinone oxidoreductase that uses light energy to abstract electrons from H(2)O, generating O(2) and a proton gradient subsequently used for ATP formation. It consists of a core antenna complex that captures photons, and an electron transfer chain that converts photonic excitation into a charge separation. The polypeptide is Photosystem II reaction center protein J (Oenothera elata subsp. hookeri (Hooker's evening primrose)).